A 1224-amino-acid polypeptide reads, in one-letter code: Potassium channel subfamily T member 1 (1224 aa).

The tract at residues 1–37 (MARAKLPRSPSEGKAGPGDTPAGAAAPEEPHGLSPLL) is disordered. Over 1–79 (MARAKLPRSP…LFFIKNQRSS (79 aa)) the chain is Cytoplasmic. Residues 13-27 (GKAGPGDTPAGAAAP) show a composition bias toward low complexity. The chain crosses the membrane as a helical span at residues 80–112 (LRIRLFNFSLKLLTCLLYIVRVLLDNPDQGIGC). The Extracellular portion of the chain corresponds to 113-139 (WGCTKYNYTFNGSSSEFHWAPILWVER). Asparagine 119 and asparagine 123 each carry an N-linked (GlcNAc...) asparagine glycan. A helical membrane pass occupies residues 140-164 (KMALWVIQVIVATISFLETMLIIYL). At 165-178 (SYKGNIWEQIFHVS) the chain is on the cytoplasmic side. The chain crosses the membrane as a helical span at residues 179–194 (FVLEMINTLPFIITVF). The Extracellular segment spans residues 195–201 (WPPLRNL). A helical membrane pass occupies residues 202 to 219 (FIPVFLNCWLAKHALENM). Over 220-232 (INDFHRAILRTQS) the chain is Cytoplasmic. Residues 233–260 (AMFNQVLILFCTLLCLVFTGTCGIQHLE) form a helical membrane-spanning segment. At 261-267 (RAGGNLN) the chain is on the extracellular side. Residues 268-288 (LLTSFYFCIVTFSTVGFGDVT) constitute an intramembrane region (pore-forming). K(+) is bound by residues valine 282 and glycine 283. Residues 289–290 (PK) lie on the Extracellular side of the membrane. Residues 291–324 (IWPSQLLVVILICVTLVVLPLQFEELVYLWMERQ) form a helical membrane-spanning segment. Over 325-1224 (KSGGNYSRHR…NPETRDETQL (900 aa)) the chain is Cytoplasmic. The 137-residue stretch at 338 to 474 (EKHVVLCVSS…FHVKFADHVV (137 aa)) folds into the RCK N-terminal 1 domain. Residues leucine 499, histidine 502, serine 524, and asparagine 526 each coordinate Na(+). Residues 644–675 (QNTDCRPSQGGSGGDGTKLTLPTENGSGSRRP) form a disordered region. Polar residues predominate over residues 663-673 (TLPTENGSGSR). Zn(2+) contacts are provided by cysteine 744 and cysteine 745. Residues arginine 747 and lysine 750 each coordinate K(+). The Na(+) site is built by arginine 747 and lysine 750. Zn(2+) contacts are provided by cysteine 752 and histidine 754. Residues asparagine 755, tyrosine 757, tyrosine 763, and glycine 764 each coordinate K(+). Residue tyrosine 757 participates in Na(+) binding. Residue phenylalanine 765 coordinates Na(+). The RCK N-terminal 2 domain occupies 767 to 907 (NKLIIVSAET…QFRAKDSYSL (141 aa)). The K(+) site is built by serine 773, leucine 804, aspartate 806, glycine 828, and aspartate 851. 2 disordered regions span residues 1038 to 1066 (REAK…ADPV) and 1198 to 1224 (SSSQ…ETQL). Low complexity-rich tracts occupy residues 1045-1055 (GTRAASGSGST) and 1198-1215 (SSSQ…SSCN).

It belongs to the potassium channel family. Calcium-activated (TC 1.A.1.3) subfamily. KCa4.1/KCNT1 sub-subfamily. Homotetramer; which constitutes the Na(+)-activated K(+) channel. Interacts with KCNT2; these heterodimer channels differ from the homomers in their unitary conductance, kinetic behavior, subcellular localization, and response to activation of protein kinase C. Interacts (via C-terminus) with FMR1; this interaction alters gating properties of KCNT1. Interacts with CRBN via its cytoplasmic C-terminus. In terms of processing, phosphorylated by protein kinase C. Phosphorylation of the C-terminal domain increases channel activity. Enriched in the brainstem and olfactory bulb and detected at significant levels in four different brain regions.

It is found in the cell membrane. It catalyses the reaction K(+)(in) = K(+)(out). Its activity is regulated as follows. Activated by high intracellular Na(+). In addition to activation by Na(+), is cooperatively activated by intracellular Cl(-) levels. Inhibited by Zn(2+). Activated upon stimulation of G-protein coupled receptors, such as CHRM1 and GRIA1. Its function is as follows. Sodium-activated K(+) channel. Acts as an important mediator of neuronal membrane excitability. Contributes to the delayed outward currents. Regulates neuronal bursting in sensory neurons. Contributes to synaptic development and plasticity. This chain is Potassium channel subfamily T member 1 (Kcnt1), found in Mus musculus (Mouse).